Consider the following 290-residue polypeptide: UPF0761 membrane protein YihY (290 aa).

6 helical membrane-spanning segments follow: residues 44–64 (LLSL…FPMF), 104–124 (VGAC…DSAL), 140–160 (FAVY…SLAI), 183–203 (ILPL…VPTT), 210–230 (ALVG…GFAL), and 244–264 (VLAV…IVLL).

It belongs to the UPF0761 family.

It localises to the cell inner membrane. The chain is UPF0761 membrane protein YihY from Salmonella agona (strain SL483).